We begin with the raw amino-acid sequence, 407 residues long: GTPase Obg (407 aa).

Residues 1–159 (MKFVDEVSIR…RDLKMEMKVL (159 aa)) form the Obg domain. The disordered stretch occupies residues 127–150 (NTRFKSSTNRAPRQTTPGKPGDQR). Polar residues predominate over residues 129-143 (RFKSSTNRAPRQTTP). Positions 160-333 (ADVGLLGLPN…LSHDLMRYLE (174 aa)) constitute an OBG-type G domain. GTP contacts are provided by residues 166–173 (GLPNAGKS), 191–195 (FTTLV), 213–216 (DIPG), 283–286 (NKAD), and 314–316 (SAI). Residues serine 173 and threonine 193 each contribute to the Mg(2+) site. The tract at residues 378 to 407 (VKSVHDIGDDDDWDDFEDDEDGPEIIYVRD) is disordered. Positions 385–400 (GDDDDWDDFEDDEDGP) are enriched in acidic residues.

Belongs to the TRAFAC class OBG-HflX-like GTPase superfamily. OBG GTPase family. Monomer. Mg(2+) is required as a cofactor.

It localises to the cytoplasm. Functionally, an essential GTPase which binds GTP, GDP and possibly (p)ppGpp with moderate affinity, with high nucleotide exchange rates and a fairly low GTP hydrolysis rate. Plays a role in control of the cell cycle, stress response, ribosome biogenesis and in those bacteria that undergo differentiation, in morphogenesis control. This is GTPase Obg from Pseudomonas entomophila (strain L48).